Reading from the N-terminus, the 61-residue chain is Large ribosomal subunit protein uL30 (61 aa).

Belongs to the universal ribosomal protein uL30 family. As to quaternary structure, part of the 50S ribosomal subunit.

This chain is Large ribosomal subunit protein uL30, found in Bordetella parapertussis (strain 12822 / ATCC BAA-587 / NCTC 13253).